Here is a 289-residue protein sequence, read N- to C-terminus: MTLKVKGEGLGAQVTGVDPKNLDDITTDEIRDIVYTNKLVVLKDVHPSPREFIKLGRIIGQIVPYYEPMYHHEDHPEIFVSSTEEGQGVPKTGAFWHIDYMFMPEPFAFSMVLPLAVPGHDRGTYFIDLARVWQSLPAAKRDPARGTVSTHDPRRHIKIRPSDVYRPIGEVWDEINRTTPPIKWPTVIRHPKTGQEILYICATGTTKIEDKDGNPVDPEVLQELMAATGQLDPEYQSPFIHTQHYQVGDIILWDNRVLMHRAKHGSAAGTLTTYRLTMLDGLKTPGYAA.

Positions 65, 70, and 93 each coordinate a (3R)-3-[(carboxymethyl)amino]fatty acid. Residues His97 and Asp99 each coordinate Fe(2+). Residues Tyr100 and Lys158 each contribute to the a (3R)-3-[(carboxymethyl)amino]fatty acid site. His260 lines the Fe(2+) pocket. His264 contacts 2-oxoglutarate. A (3R)-3-[(carboxymethyl)amino]fatty acid is bound at residue Arg275.

It belongs to the TfdA dioxygenase family. It depends on Fe(2+) as a cofactor.

It catalyses the reaction a (3R)-3-[(carboxymethyl)amino]fatty acid + 2 2-oxoglutarate + 2 O2 = a (3R)-3-isocyanyl-fatty acid + 2 succinate + 3 CO2 + 2 H2O. The enzyme catalyses a (3R)-3-[(carboxymethyl)amino]fatty acid + 2-oxoglutarate + O2 = a (3R)-3-{[carboxy(hydroxy)methyl]amino}fatty acid + succinate + CO2. It carries out the reaction a (3R)-3-{[carboxy(hydroxy)methyl]amino}fatty acid + 2-oxoglutarate + O2 = a (3R)-3-isocyanyl-fatty acid + succinate + 2 CO2 + 2 H2O. Its function is as follows. Involved in the biosynthesis of a unique class of isonitrile lipopeptides (INLPs) that seem to play a role in metal acquisition. Catalyzes the conversion of (3R)-3-[(carboxymethyl)amino]fatty acids to (3R)-3-isocyanyl-fatty acids through an oxidative decarboxylation mechanism, thereby generating the isonitrile group of INLPs. The sequence is that of (3R)-3-[(carboxymethyl)amino]fatty acid oxygenase/decarboxylase from Mycobacterium bovis (strain ATCC BAA-935 / AF2122/97).